We begin with the raw amino-acid sequence, 300 residues long: Nucleotide-binding protein TM1040_2438 (300 aa).

24-31 (GPSGAGRT) contacts ATP. Residue 71–74 (DPRN) coordinates GTP.

Belongs to the RapZ-like family.

Its function is as follows. Displays ATPase and GTPase activities. The polypeptide is Nucleotide-binding protein TM1040_2438 (Ruegeria sp. (strain TM1040) (Silicibacter sp.)).